The sequence spans 451 residues: uncharacterized protein (451 aa).

The segment at 415–435 (AHGDTEWLPPPHLDHGQPRVN) is disordered.

It belongs to the Rv1128c/1148c/1588c/1702c/1945/3466 family.

This is an uncharacterized protein from Mycobacterium tuberculosis (strain ATCC 25618 / H37Rv).